The following is an 85-amino-acid chain: Small ribosomal subunit protein bS18 (85 aa).

Belongs to the bacterial ribosomal protein bS18 family. In terms of assembly, part of the 30S ribosomal subunit. Forms a tight heterodimer with protein bS6.

Its function is as follows. Binds as a heterodimer with protein bS6 to the central domain of the 16S rRNA, where it helps stabilize the platform of the 30S subunit. The protein is Small ribosomal subunit protein bS18 of Helicobacter pylori (strain P12).